The primary structure comprises 141 residues: Large ribosomal subunit protein uL11 (141 aa).

This sequence belongs to the universal ribosomal protein uL11 family. Part of the ribosomal stalk of the 50S ribosomal subunit. Interacts with L10 and the large rRNA to form the base of the stalk. L10 forms an elongated spine to which L12 dimers bind in a sequential fashion forming a multimeric L10(L12)X complex. In terms of processing, one or more lysine residues are methylated.

Its function is as follows. Forms part of the ribosomal stalk which helps the ribosome interact with GTP-bound translation factors. The sequence is that of Large ribosomal subunit protein uL11 from Lactiplantibacillus plantarum (strain ATCC BAA-793 / NCIMB 8826 / WCFS1) (Lactobacillus plantarum).